The following is a 327-amino-acid chain: BarH-like 1 homeobox protein (327 aa).

Disordered regions lie at residues 1–90 (MEGS…AQSR), 113–181 (PYSS…PRKA), and 303–327 (LQGA…AQPR). Over residues 33–54 (RSPLELSPRSESSSDCSSPASP) the composition is skewed to low complexity. The segment covering 79–90 (QPGQLSAPAQSR) has biased composition (polar residues). Basic and acidic residues-rich tracts occupy residues 133–143 (AGEDFRDKLDK) and 152–166 (SEYK…EISS). A DNA-binding region (homeobox) is located at residues 178-237 (PRKARTAFTDHQLAQLERSFERQKYLSVQDRMELAASLNLTDTQVKTWYQNRRTKWKRQT). The span at 308–318 (EPPPPLPPLPG) shows a compositional bias: pro residues.

This sequence belongs to the BAR homeobox family.

The protein localises to the nucleus. The chain is BarH-like 1 homeobox protein (Barhl1) from Mus musculus (Mouse).